We begin with the raw amino-acid sequence, 292 residues long: Lipoyl synthase (292 aa).

Positions 34, 39, 45, 60, 64, 67, and 273 each coordinate [4Fe-4S] cluster. A Radical SAM core domain is found at 46–262 (WNKKHATVMI…KYVAYSKGFL (217 aa)).

It belongs to the radical SAM superfamily. Lipoyl synthase family. [4Fe-4S] cluster serves as cofactor.

The protein resides in the cytoplasm. The catalysed reaction is [[Fe-S] cluster scaffold protein carrying a second [4Fe-4S](2+) cluster] + N(6)-octanoyl-L-lysyl-[protein] + 2 oxidized [2Fe-2S]-[ferredoxin] + 2 S-adenosyl-L-methionine + 4 H(+) = [[Fe-S] cluster scaffold protein] + N(6)-[(R)-dihydrolipoyl]-L-lysyl-[protein] + 4 Fe(3+) + 2 hydrogen sulfide + 2 5'-deoxyadenosine + 2 L-methionine + 2 reduced [2Fe-2S]-[ferredoxin]. It participates in protein modification; protein lipoylation via endogenous pathway; protein N(6)-(lipoyl)lysine from octanoyl-[acyl-carrier-protein]: step 2/2. Catalyzes the radical-mediated insertion of two sulfur atoms into the C-6 and C-8 positions of the octanoyl moiety bound to the lipoyl domains of lipoate-dependent enzymes, thereby converting the octanoylated domains into lipoylated derivatives. This is Lipoyl synthase from Ehrlichia ruminantium (strain Welgevonden).